The primary structure comprises 101 residues: Aspartyl/glutamyl-tRNA(Asn/Gln) amidotransferase subunit C (101 aa).

The protein belongs to the GatC family. Heterotrimer of A, B and C subunits.

The catalysed reaction is L-glutamyl-tRNA(Gln) + L-glutamine + ATP + H2O = L-glutaminyl-tRNA(Gln) + L-glutamate + ADP + phosphate + H(+). It catalyses the reaction L-aspartyl-tRNA(Asn) + L-glutamine + ATP + H2O = L-asparaginyl-tRNA(Asn) + L-glutamate + ADP + phosphate + 2 H(+). In terms of biological role, allows the formation of correctly charged Asn-tRNA(Asn) or Gln-tRNA(Gln) through the transamidation of misacylated Asp-tRNA(Asn) or Glu-tRNA(Gln) in organisms which lack either or both of asparaginyl-tRNA or glutaminyl-tRNA synthetases. The reaction takes place in the presence of glutamine and ATP through an activated phospho-Asp-tRNA(Asn) or phospho-Glu-tRNA(Gln). The sequence is that of Aspartyl/glutamyl-tRNA(Asn/Gln) amidotransferase subunit C from Lactococcus lactis subsp. cremoris (strain SK11).